A 481-amino-acid polypeptide reads, in one-letter code: GTPase Der (481 aa).

EngA-type G domains are found at residues 3–166 (PVVA…ESDF) and 194–367 (IKLA…MSAT). GTP is bound by residues 9–16 (GRPNVGKS), 56–60 (DTGGI), 118–121 (NKVD), 200–207 (GKPNVGKS), 247–251 (DTAGV), and 312–315 (NKWD). The 85-residue stretch at 368 to 452 (KRINTALLTQ…PIKIEFREGN (85 aa)) folds into the KH-like domain.

Belongs to the TRAFAC class TrmE-Era-EngA-EngB-Septin-like GTPase superfamily. EngA (Der) GTPase family. As to quaternary structure, associates with the 50S ribosomal subunit.

In terms of biological role, GTPase that plays an essential role in the late steps of ribosome biogenesis. This is GTPase Der from Alteromonas mediterranea (strain DSM 17117 / CIP 110805 / LMG 28347 / Deep ecotype).